We begin with the raw amino-acid sequence, 310 residues long: MMAAEATAALIDRLPKVRGELVADAPLAPLTWFRAGGNAEVLFRPADADDLAAFLAGTPADVPVTIIGVGSNLLVREGGVPGVVIRLGRGFMNIEIEGTCVRAGTAALDVAVSRAAQEAGLAGLEFYRGIPGSIGGALRMNGGAYGRETKDVLVEAVAIDRAGKRHVLTNADMHYTYRHCGAPDDLIFVEALFQGTPGNAEDILRRMNEITSSREATQPIRTRTGGSTFKNPEGHKSWQLIDAAGCRGLRKGGAQVSELHCNFLINTGDATASDIEDLGEEVRARVKETSGVTLEWEIRRIGIRKERGGA.

In terms of domain architecture, FAD-binding PCMH-type spans 34–213 (RAGGNAEVLF…LRRMNEITSS (180 aa)). Residue arginine 178 is part of the active site. Residue serine 227 is the Proton donor of the active site. Residue glutamate 297 is part of the active site.

Belongs to the MurB family. It depends on FAD as a cofactor.

It localises to the cytoplasm. The catalysed reaction is UDP-N-acetyl-alpha-D-muramate + NADP(+) = UDP-N-acetyl-3-O-(1-carboxyvinyl)-alpha-D-glucosamine + NADPH + H(+). Its pathway is cell wall biogenesis; peptidoglycan biosynthesis. Cell wall formation. In Parvibaculum lavamentivorans (strain DS-1 / DSM 13023 / NCIMB 13966), this protein is UDP-N-acetylenolpyruvoylglucosamine reductase.